A 125-amino-acid polypeptide reads, in one-letter code: 17 kDa gas vesicle protein (125 aa).

This sequence belongs to the gas vesicle GvpC family.

The protein localises to the gas vesicle. Gas vesicles (GV) are hollow, gas filled proteinaceous nanostructures. During planktonic growth they allow positioning of the organism at a favorable depth for light or nutrient acquisition. The protein is 17 kDa gas vesicle protein of Dactylococcopsis salina (strain PCC 8305) (Myxobactron salinum).